We begin with the raw amino-acid sequence, 233 residues long: Sugar fermentation stimulation protein homolog (233 aa).

Belongs to the SfsA family.

The protein is Sugar fermentation stimulation protein homolog of Chelativorans sp. (strain BNC1).